The primary structure comprises 322 residues: tRNA dimethylallyltransferase (322 aa).

19-26 (GPTASGKT) serves as a coordination point for ATP. 21–26 (TASGKT) provides a ligand contact to substrate. Interaction with substrate tRNA regions lie at residues 44 to 47 (DSAL), 168 to 172 (QRIQR), and 255 to 260 (RCVGYR).

This sequence belongs to the IPP transferase family. Monomer. Requires Mg(2+) as cofactor.

It catalyses the reaction adenosine(37) in tRNA + dimethylallyl diphosphate = N(6)-dimethylallyladenosine(37) in tRNA + diphosphate. Its function is as follows. Catalyzes the transfer of a dimethylallyl group onto the adenine at position 37 in tRNAs that read codons beginning with uridine, leading to the formation of N6-(dimethylallyl)adenosine (i(6)A). This chain is tRNA dimethylallyltransferase, found in Cupriavidus necator (strain ATCC 17699 / DSM 428 / KCTC 22496 / NCIMB 10442 / H16 / Stanier 337) (Ralstonia eutropha).